Here is a 125-residue protein sequence, read N- to C-terminus: MLGVIVACMQDMSSYMFGQWDTPLMVLIFFMVIDYLGDIVNAAVEKSLDFKKSYMGIAKIVSVLVVIIVSVLMDRLVNKGTWFFRTFTCYFYVANEGINILENCSKLGLPMPEKLMKTLEDLKNR.

2 helical membrane-spanning segments follow: residues 22–44 (TPLM…NAAV) and 54–73 (YMGI…SVLM).

It belongs to the bacteriophage holin family. Cp-1 holin subfamily.

It is found in the cell membrane. This is an uncharacterized protein from Clostridium acetobutylicum (strain ATCC 824 / DSM 792 / JCM 1419 / IAM 19013 / LMG 5710 / NBRC 13948 / NRRL B-527 / VKM B-1787 / 2291 / W).